A 520-amino-acid polypeptide reads, in one-letter code: Arginine biosynthesis bifunctional protein ArgJ, chloroplastic (520 aa).

Substrate is bound by residues Thr-264, Lys-290, Thr-301, Glu-388, Asn-515, and Thr-520. Thr-301 functions as the Nucleophile in the catalytic mechanism.

Belongs to the ArgJ family. Heterodimer of an alpha and a beta chain.

It is found in the plastid. Its subcellular location is the chloroplast. It carries out the reaction N(2)-acetyl-L-ornithine + L-glutamate = N-acetyl-L-glutamate + L-ornithine. It catalyses the reaction L-glutamate + acetyl-CoA = N-acetyl-L-glutamate + CoA + H(+). It functions in the pathway amino-acid biosynthesis; L-arginine biosynthesis; L-ornithine and N-acetyl-L-glutamate from L-glutamate and N(2)-acetyl-L-ornithine (cyclic): step 1/1. Its pathway is amino-acid biosynthesis; L-arginine biosynthesis; N(2)-acetyl-L-ornithine from L-glutamate: step 1/4. In terms of biological role, catalyzes two activities which are involved in the cyclic version of arginine biosynthesis: the synthesis of acetylglutamate from glutamate and acetyl-CoA, and of ornithine by transacetylation between acetylornithine and glutamate. The protein is Arginine biosynthesis bifunctional protein ArgJ, chloroplastic of Physcomitrium patens (Spreading-leaved earth moss).